We begin with the raw amino-acid sequence, 27 residues long: MIINHNMSAINANRVLGBTNADITKDL.

This sequence belongs to the bacterial flagellin family. The flagellum consists of an outer layer composed of repeating units of FlaA around a core that contains one or all of five antigenically related polypeptides.

The protein localises to the periplasmic flagellum. The protein resides in the periplasm. Its function is as follows. Component of the core of the flagella. This is Flagellar filament 31.5 kDa core protein from Spirochaeta aurantia.